A 31-amino-acid chain; its full sequence is M-poneritoxin-Nc3b (31 aa).

The protein belongs to the ponericin-G family. As to expression, expressed by the venom gland.

The protein localises to the secreted. Its subcellular location is the target cell membrane. In terms of biological role, membrane-perturbating peptide with a few moderate activities. It is insecticidal, since it induces reversible paralysis in insects (L.cuprina) after 1 hour, but fails to kill them. It is also antiparasitic, since it moderately inhibits the larval development of the major pathogenic nematode of ruminants (H.contortus, IC(50)=23.2 uM) and reduces the motility of adult males of the other nematode B.malayi. It does not show antibacterial activity (MIC&gt;40 uM). It is not cytotoxic to HEK293 cells and does not induce hemolysis in human erythrocytes. It does not cause an increase in intracellular calcium concentration on neuronal and epithelial cell lines. In Neoponera commutata (Large hunting ant), this protein is M-poneritoxin-Nc3b.